The primary structure comprises 509 residues: 2,3-bisphosphoglycerate-independent phosphoglycerate mutase (509 aa).

Mn(2+) contacts are provided by Asp-14 and Ser-64. The active-site Phosphoserine intermediate is Ser-64. Residues His-125, 155–156 (RD), Arg-187, Arg-193, 259–262 (RADR), and Lys-332 contribute to the substrate site. Mn(2+)-binding residues include Asp-399, His-403, Asp-440, His-441, and His-459.

This sequence belongs to the BPG-independent phosphoglycerate mutase family. Monomer. It depends on Mn(2+) as a cofactor.

The enzyme catalyses (2R)-2-phosphoglycerate = (2R)-3-phosphoglycerate. The protein operates within carbohydrate degradation; glycolysis; pyruvate from D-glyceraldehyde 3-phosphate: step 3/5. In terms of biological role, catalyzes the interconversion of 2-phosphoglycerate and 3-phosphoglycerate. The protein is 2,3-bisphosphoglycerate-independent phosphoglycerate mutase of Aeromonas salmonicida (strain A449).